Reading from the N-terminus, the 239-residue chain is Transcriptional activatory protein AadR (239 aa).

27 to 149 (ICGELGPADH…FATRELSLAQ (123 aa)) contacts a nucleoside 3',5'-cyclic phosphate. Residues 158–231 (RSAEEKVAAF…PDGVRVLDPK (74 aa)) form the HTH crp-type domain. A DNA-binding region (H-T-H motif) is located at residues 191-210 (RQDIADFLGLTIETVSRTFT).

In terms of biological role, transcriptional activator of anaerobic gene expression. For aromatic acid degradation. Also required for the anaerobic degradation of benzoate. This is Transcriptional activatory protein AadR (aadR) from Rhodopseudomonas palustris (strain ATCC BAA-98 / CGA009).